Here is a 390-residue protein sequence, read N- to C-terminus: Glucose-fructose oxidoreductase domain-containing protein 1 (390 aa).

Residues methionine 1–leucine 21 form the signal peptide.

It belongs to the Gfo/Idh/MocA family. In terms of assembly, homodimer. Interacts with NKIRAS2.

It localises to the secreted. Functionally, probably catalytically inactive enzyme. Does not bind NAD or NADP. The sequence is that of Glucose-fructose oxidoreductase domain-containing protein 1 (Gfod1) from Mus musculus (Mouse).